We begin with the raw amino-acid sequence, 484 residues long: UDP-N-acetylmuramate--L-alanine ligase (484 aa).

124-130 provides a ligand contact to ATP; that stretch reads GTHGKTT.

This sequence belongs to the MurCDEF family.

The protein resides in the cytoplasm. It carries out the reaction UDP-N-acetyl-alpha-D-muramate + L-alanine + ATP = UDP-N-acetyl-alpha-D-muramoyl-L-alanine + ADP + phosphate + H(+). The protein operates within cell wall biogenesis; peptidoglycan biosynthesis. In terms of biological role, cell wall formation. The sequence is that of UDP-N-acetylmuramate--L-alanine ligase from Pseudoalteromonas atlantica (strain T6c / ATCC BAA-1087).